The chain runs to 620 residues: Membralin (620 aa).

A disordered region spans residues 1-33; the sequence is MSEHVEPAAPGPGPNGGGGGPAPARGPRTPNLN. At Ser2 the chain carries N-acetylserine. A compositionally biased stretch (low complexity) spans 22-31; the sequence is APARGPRTPN. Phosphothreonine is present on Thr29. The chain crosses the membrane as a helical span at residues 70-90; that stretch reads FFVLLKALFVLFVLAYIHIVF. Asn189 is a glycosylation site (N-linked (GlcNAc...) asparagine). 3 consecutive transmembrane segments (helical) span residues 302 to 322, 346 to 366, and 426 to 446; these read TSYLAAFAIMVIFTLSVSMLL, IAFPAAPLLTVILALVGMEAI, and YSSLALVTSWLFIQHSMIYFF. Disordered regions lie at residues 474-517 and 568-620; these read TPTA…GPVA and SPLG…EVGS. 2 stretches are compositionally biased toward low complexity: residues 499–517 and 568–593; these read PPALGPVSPGASGSPGPVA and SPLGPAGGLPHAPQDSVPPSDSAASD.

Belongs to the membralin family. Interacts with ERLIN2.

It localises to the endoplasmic reticulum membrane. May have a role in the ERAD pathway required for clearance of misfolded proteins in the endoplasmic reticulum (ER). Promotes survival of motor neurons, probably by protecting against ER stress. The polypeptide is Membralin (TMEM259) (Homo sapiens (Human)).